Reading from the N-terminus, the 498-residue chain is Putative BTB/POZ domain-containing protein L67 (498 aa).

A BTB domain is found at serine 26–asparagine 96.

The protein belongs to the mimivirus BTB/WD family.

The chain is Putative BTB/POZ domain-containing protein L67 from Acanthamoeba polyphaga (Amoeba).